Reading from the N-terminus, the 29-residue chain is Toxin Bcg III 15.67 (29 aa).

The EGF-like domain occupies 2–29 (QGTACTGEHAHSFCLNGGTCRHIQQLGE). Cys6 and Cys21 form a disulfide bridge.

It is found in the secreted. The protein resides in the nematocyst. Functionally, has both toxic and EGF activity. This chain is Toxin Bcg III 15.67, found in Bunodosoma cangicum (Sea anemone).